We begin with the raw amino-acid sequence, 335 residues long: Pro-cathepsin H (335 aa).

A signal peptide spans 1 to 22; the sequence is MWAVLPLLCAGAWLLGAPACGA. The propeptide at 23 to 97 is activation peptide; that stretch reads AELAANSLEK…DELKRKYLWS (75 aa). N-linked (GlcNAc...) asparagine glycans are attached at residues N72 and N101. Cystine bridges form between C102/C327, C138/C181, C172/C214, and C272/C322. Positions 106-115 are excised as a propeptide; sequence KSNYLRGTGP. Residue C141 is part of the active site. The N-linked (GlcNAc...) asparagine glycan is linked to N230. Active-site residues include H281 and N301.

It belongs to the peptidase C1 family. As to quaternary structure, composed of a mini chain and a large chain. The large chain may be split into heavy and light chain. All chains are held together by disulfide bonds.

The protein resides in the lysosome. It catalyses the reaction Hydrolysis of proteins, acting as an aminopeptidase (notably, cleaving Arg-|-Xaa bonds) as well as an endopeptidase.. Important for the overall degradation of proteins in lysosomes. The polypeptide is Pro-cathepsin H (CTSH) (Bos taurus (Bovine)).